The sequence spans 173 residues: Photosystem I assembly protein Ycf3 (173 aa).

3 TPR repeats span residues 35–68 (AYLY…EDNQ), 72–105 (GETL…NPKQ), and 120–153 (GRMA…YPGG).

It belongs to the Ycf3 family.

It is found in the cellular thylakoid membrane. Functionally, essential for the assembly of the photosystem I (PSI) complex. May act as a chaperone-like factor to guide the assembly of the PSI subunits. The chain is Photosystem I assembly protein Ycf3 from Prochlorococcus marinus (strain NATL1A).